The following is a 267-amino-acid chain: Undecaprenyl-diphosphatase (267 aa).

7 helical membrane passes run 1-21 (MTLF…FLPV), 49-69 (VGTL…AVAG), 83-103 (AFLA…GLAL), 111-131 (ALRS…VLYW), 190-210 (MLMS…EVAA), 219-239 (DAAI…TLMM), and 245-265 (VSFT…LIIA).

The protein belongs to the UppP family.

Its subcellular location is the cell inner membrane. It carries out the reaction di-trans,octa-cis-undecaprenyl diphosphate + H2O = di-trans,octa-cis-undecaprenyl phosphate + phosphate + H(+). Functionally, catalyzes the dephosphorylation of undecaprenyl diphosphate (UPP). Confers resistance to bacitracin. This Dinoroseobacter shibae (strain DSM 16493 / NCIMB 14021 / DFL 12) protein is Undecaprenyl-diphosphatase.